The primary structure comprises 755 residues: Serine/threonine-protein kinase GL21140 (755 aa).

Positions 18–52 (QASASGSGTPKKTAASSAAAQNSKQLLDQLSQQQK) are enriched in low complexity. The tract at residues 18–128 (QASASGSGTP…GSANTNGSAS (111 aa)) is disordered. 2 stretches are compositionally biased toward basic and acidic residues: residues 53 to 66 (AQEE…RDCD) and 74 to 84 (EPEKDLDELRD). Residues 87–99 (GSLTGSGSVGKSN) show a composition bias toward polar residues. Over residues 100–128 (GSLSGASSTTSAPAGTSTPGSANTNGSAS) the composition is skewed to low complexity. 2 consecutive Doublecortin domains span residues 157-243 (HRIK…VDYN) and 314-397 (RIVT…VDDF). The Protein kinase domain occupies 484 to 742 (YTLSQIIGDG…SEDILDHYWT (259 aa)). ATP-binding positions include 490–498 (IGDGNFAIV) and lysine 513. The Proton acceptor role is filled by aspartate 605.

It belongs to the protein kinase superfamily. CAMK Ser/Thr protein kinase family. CaMK subfamily.

The enzyme catalyses L-seryl-[protein] + ATP = O-phospho-L-seryl-[protein] + ADP + H(+). The catalysed reaction is L-threonyl-[protein] + ATP = O-phospho-L-threonyl-[protein] + ADP + H(+). The sequence is that of Serine/threonine-protein kinase GL21140 from Drosophila persimilis (Fruit fly).